A 437-amino-acid polypeptide reads, in one-letter code: MLTAFARAFRTPDLRKKLLFTLAIIVVYRVGTHIPIPGVDYKNVQQCVREASGNQGLFGLVNMFSGGALLQITIFALGIMPYITASIILQLLTVVIPRLEALKKEGQAGTAKITQYTRYLTVALAILQGTGLVATARSAPLFGRCSVGGQIVPDQSIFTTITMVICMTAGTCVVMWLGELITDRGIGNGMSILMFISIAATFPSALWAIKKQGTLAGGWIEFGTVIAVGLIMVALVVFVEQAQRRIPVQYAKRMIGRRSYGGTSTYIPLKVNQAGVIPVIFASSLLYIPALVAQFAGGNSGWKSWVEQNLTKGDHPIYIVTYFLLIVFFAFFYVAISFNPEEVADNMKKYGGFIPGIRAGRPTAEYLSYVLNRITWPGSLYLGLIALVPTMALVGFGASQNFPFGGTSILIIVGVGLETVKQIESQLQQRNYEGFLR.

Helical transmembrane passes span 19-39 (LFTL…IPGV), 69-89 (LLQI…SIIL), 122-142 (VALA…APLF), 157-177 (IFTT…VMWL), 189-209 (GMSI…LWAI), 219-239 (WIEF…VVFV), 276-296 (VIPV…AQFA), 316-336 (PIYI…YVAI), 378-398 (GSLY…GFGA), and 400-420 (QNFP…LETV).

Belongs to the SecY/SEC61-alpha family. In terms of assembly, component of the Sec protein translocase complex. Heterotrimer consisting of SecY, SecE and SecG subunits. The heterotrimers can form oligomers, although 1 heterotrimer is thought to be able to translocate proteins. Interacts with the ribosome. Interacts with SecDF, and other proteins may be involved. Interacts with SecA.

It localises to the cell membrane. Its function is as follows. The central subunit of the protein translocation channel SecYEG. Consists of two halves formed by TMs 1-5 and 6-10. These two domains form a lateral gate at the front which open onto the bilayer between TMs 2 and 7, and are clamped together by SecE at the back. The channel is closed by both a pore ring composed of hydrophobic SecY resides and a short helix (helix 2A) on the extracellular side of the membrane which forms a plug. The plug probably moves laterally to allow the channel to open. The ring and the pore may move independently. The polypeptide is Protein translocase subunit SecY (Streptomyces galbus).